The primary structure comprises 277 residues: Shikimate dehydrogenase (NADP(+)) (277 aa).

Shikimate contacts are provided by residues 15-17 (SKS) and threonine 64. Lysine 68 functions as the Proton acceptor in the catalytic mechanism. Residues asparagine 89 and aspartate 104 each contribute to the shikimate site. NADP(+) is bound by residues 129-133 (GAGGA), 153-158 (NRTAKR), and methionine 217. Tyrosine 219 contacts shikimate. Residue glycine 242 participates in NADP(+) binding.

This sequence belongs to the shikimate dehydrogenase family. In terms of assembly, homodimer.

The catalysed reaction is shikimate + NADP(+) = 3-dehydroshikimate + NADPH + H(+). Its pathway is metabolic intermediate biosynthesis; chorismate biosynthesis; chorismate from D-erythrose 4-phosphate and phosphoenolpyruvate: step 4/7. Functionally, involved in the biosynthesis of the chorismate, which leads to the biosynthesis of aromatic amino acids. Catalyzes the reversible NADPH linked reduction of 3-dehydroshikimate (DHSA) to yield shikimate (SA). This Hydrogenovibrio crunogenus (strain DSM 25203 / XCL-2) (Thiomicrospira crunogena) protein is Shikimate dehydrogenase (NADP(+)).